Reading from the N-terminus, the 337-residue chain is Cytoskeleton protein RodZ (337 aa).

Topologically, residues 1 to 111 (MNTEATHDQN…LGKRRKKRDG (111 aa)) are cytoplasmic. Positions 19-71 (LRNAREQLGLSQQAVAERLCLKVSTVRDIEEDKAPADLASTFLRGYIRSYARL) constitute an HTH cro/C1-type domain. The segment at residues 30 to 49 (QQAVAERLCLKVSTVRDIEE) is a DNA-binding region (H-T-H motif). Residues 112–132 (WLMTFTWLVLFVVIGLSGAWW) traverse the membrane as a helical; Signal-anchor for type II membrane protein segment. Residues 133-337 (WQDHKAQQEE…TLNAEQSPAQ (205 aa)) lie on the Periplasmic side of the membrane. Positions 145–167 (TMADQSSAELSSNSEQGQSVPLN) are enriched in polar residues. The disordered stretch occupies residues 145 to 236 (TMADQSSAEL…TAATTPDGAA (92 aa)). Positions 168–207 (TSTTTDPATTSTPPASVDTTATNTQTPAVTAPAPAVDPQQ) are enriched in low complexity. Positions 208–218 (NAVVSPSQANV) are enriched in polar residues. The span at 219–236 (DTAATPAPTAATTPDGAA) shows a compositional bias: low complexity.

This sequence belongs to the RodZ family.

Its subcellular location is the cell inner membrane. Cytoskeletal protein that is involved in cell-shape control through regulation of the length of the long axis. The polypeptide is Cytoskeleton protein RodZ (Escherichia coli O139:H28 (strain E24377A / ETEC)).